Here is a 607-residue protein sequence, read N- to C-terminus: BTB/POZ domain-containing protein DOT3 (607 aa).

The BTB domain maps to Thr52–Pro121. The NPH3 domain occupies Arg211–Ser487. Tyr428 carries the phosphotyrosine modification. Disordered stretches follow at residues Asp498–Asn520 and Lys573–Ser607. Basic and acidic residues-rich tracts occupy residues Lys499–Asn520 and Thr577–Glu586. Residues Arg511–Asn563 adopt a coiled-coil conformation.

The protein belongs to the NPH3 family. As to expression, expressed in emerging leaf primordia.

Its pathway is protein modification; protein ubiquitination. Its function is as follows. May act as a substrate-specific adapter of an E3 ubiquitin-protein ligase complex (CUL3-RBX1-BTB) which mediates the ubiquitination and subsequent proteasomal degradation of target proteins. Involved in leaf vasculature patterning. This Arabidopsis thaliana (Mouse-ear cress) protein is BTB/POZ domain-containing protein DOT3.